An 816-amino-acid chain; its full sequence is MESRVLLRTFCLLFGLGAVWGLGVDPSLQIDVLTELELGESTTGVRQVPGLHNGTKAFLFQDTPRSIKASTATAEQFFQKLRNKHEFTILVTLKQTHLNSGVILSIHHLDHRYLELESSGHRNEVRLHYRSGSHHPHTEVFPYILADDKWHKLSLAISASHLILHIDCNKIYERVVEKPSTDLPLGTSFWLGQRNNAHGYFKGIMQDVQLLVMPQGFIAQCPDLNRTCPTCNDFHGLVQKIMELQDILAKTSAKLSRAEQRMNRLDQCYCERTCTMKGTTYREFESWTDGCKNCTCLNGTIQCETLICPNPDCPLKSAPAYVDGKCCKECKSICQFQGRTYFEGQRNTVYSSSGVCVLYECKDQSMKLVESSGCPALDCAESHQITLSHSCCKVCKGYDFCSERHNCMENSVCRNLNDRAVCSCRDGFRALREDNAYCEDIDECAEGRHYCRENTMCVNTPGSFMCICKTGYIRIDDYSCTEHDECVTNQHNCDENALCFNTVGGHNCVCKPGYTGNGTTCKAFCQDGCRNGGACIAANVCACPQGFTGHSCETDIDECSDGFVQCDSRANCINLPGWYHCECRDGYHDNGMFSPSGESCEDIDECGTGRHSCANDTICFNLDGGYDCRCPHGKNCTGDCIHDGKIKHNGQIWVLENDRCSVCSCQNGFVMCRRMVCDCENPTVDLFCCPECDPRLSSQCLHQNGETLYNSGDTWVQNCQQCRCLQGEVDCWPLPCPEVECEFSVLPENECCPRCVTDPCQADTIRNDITKTCLDEMNVVRFTGSSWIKHGTECTLCQCKNGHICCSVDPQCLQEL.

The N-terminal stretch at 1 to 21 (MESRVLLRTFCLLFGLGAVWG) is a signal peptide. The Laminin G-like domain maps to 30–258 (IDVLTELELG…AKTSAKLSRA (229 aa)). 4 N-linked (GlcNAc...) asparagine glycosylation sites follow: Asn-53, Asn-225, Asn-293, and Asn-298. The region spanning 272–331 (RTCTMKGTTYREFESWTDGCKNCTCLNGTIQCETLICPNPDCPLKSAPAYVDGKCCKECK) is the VWFC 1 domain. One can recognise an EGF-like 1 domain in the interval 397 to 439 (GYDFCSERHNCMENSVCRNLNDRAVCSCRDGFRALREDNAYCE). 3 disulfide bridges follow: Cys-401/Cys-413, Cys-407/Cys-422, and Cys-424/Cys-438. Ca(2+)-binding residues include Asp-440, Ile-441, and Glu-443. The EGF-like 2; calcium-binding domain occupies 440–481 (DIDECAEGRHYCRENTMCVNTPGSFMCICKTGYIRIDDYSCT). 9 cysteine pairs are disulfide-bonded: Cys-444–Cys-457, Cys-451–Cys-466, Cys-468–Cys-480, Cys-486–Cys-499, Cys-493–Cys-508, Cys-510–Cys-521, Cys-525–Cys-535, Cys-529–Cys-541, and Cys-543–Cys-552. 3 residues coordinate Ca(2+): Asn-459, Thr-460, and Ser-463. The region spanning 482-522 (EHDECVTNQHNCDENALCFNTVGGHNCVCKPGYTGNGTTCK) is the EGF-like 3; calcium-binding domain. N-linked (GlcNAc...) asparagine glycosylation occurs at Asn-517. Residues 523–553 (AFCQDGCRNGGACIAANVCACPQGFTGHSCE) form the EGF-like 4 domain. A glycan (O-linked (GlcNAc...) threonine) is linked at Thr-548. 3 residues coordinate Ca(2+): Asp-555, Ile-556, and Glu-558. In terms of domain architecture, EGF-like 5; calcium-binding spans 555–601 (DIDECSDGFVQCDSRANCINLPGWYHCECRDGYHDNGMFSPSGESCE). 3 cysteine pairs are disulfide-bonded: Cys-559–Cys-572, Cys-566–Cys-581, and Cys-583–Cys-600. Ca(2+) contacts are provided by Asn-574, Leu-575, and Trp-578. Ca(2+) is bound by residues Asp-602, Ile-603, and Glu-605. The EGF-like 6; calcium-binding domain maps to 602–637 (DIDECGTGRHSCANDTICFNLDGGYDCRCPHGKNCT). 3 disulfides stabilise this stretch: Cys-606/Cys-619, Cys-613/Cys-628, and Cys-630/Cys-636. Asn-615 carries N-linked (GlcNAc...) asparagine glycosylation. Ca(2+) is bound by residues Asn-621, Leu-622, and Gly-625. Asn-635 carries an N-linked (GlcNAc...) asparagine glycan. 2 VWFC domains span residues 638-693 (GDCI…PECD) and 698-756 (SQCL…PRCV).

Homotrimer. Binds to PRKCB. Interacts with NICOL1; this interaction triggers epididymal differentiation.

The protein resides in the secreted. Its function is as follows. Plays multiple roles in neural tissues, regulates neuronal proliferation, survival, differentiation, polarization, as well as axon guidance and synaptic functions. Plays an important role in axon development during neuronal differentiation through the MAPK intracellular signaling pathway. Via binding to its receptor ROBO3, plays a role in axon guidance, functions as a repulsive guidance cue for commissural axons, helping to steer them across the spinal cord midline. Required for neuron survival through the modulation of MAPK signaling pathways too. Involved in the regulation of hypothalamic GNRH secretion and the control of puberty. Testicular luminal protein that signals through a ROS1-pathway to regulate the epididymal initial segment (IS) maturation, sperm maturation and male fertility. This is Protein kinase C-binding protein NELL2 (NELL2) from Bos taurus (Bovine).